Consider the following 274-residue polypeptide: MSKKAVPPIVKAQYELYNRKLNRAIKVSGSQKKLDASFVGFSESSNPETGKPHADMSMSAKVKRVNTWLKNFDREYWENQFASKPIPRPAKQVLKGSSSKSQQRDEGEVVFTRKDSQKSVRTVSYWVCTPEKSMKPLKYKEDENVVEVTFNDLAAQKAGDKLVSILLEINVVGGAVDDKGRVAVLEKDAAVTVDYLLGSPYEAINLVSGLNKINFRSMTDVVDSIPSLLNERKVCVFQNDDSSSFYIRKWANFLQEVSAVLPVGTGKSSTIVLT.

Positions 88–112 are disordered; it reads RPAKQVLKGSSSKSQQRDEGEVVFT. A compositionally biased stretch (basic and acidic residues) spans 102–112; that stretch reads QQRDEGEVVFT.

It is found in the virion. This Rubus idaeus (Raspberry) protein is Coat protein.